The primary structure comprises 233 residues: Nuclear speckle RNA-binding protein A (233 aa).

3 disordered regions span residues 1–54 (MADG…VPDT), 68–92 (VQSG…GGNV), and 214–233 (FLRL…RGRR). Residues 71-91 (GEGGSVSMGRSGGGGGGGGGN) are compositionally biased toward gly residues. The RRM domain occupies 136–222 (NTLYVEGLPS…KFLRLQFSRK (87 aa)).

Expressed in root meristems, lateral root primordia and root vascular tissues.

It localises to the nucleus speckle. In terms of biological role, alternative splicing (AS) regulator that binds to specific mRNAs and modulates auxin effects on the transcriptome. Displaced from its targets upon binding to AS competitor long non-coding RNA (ASCO-RNA). This chain is Nuclear speckle RNA-binding protein A, found in Arabidopsis thaliana (Mouse-ear cress).